The sequence spans 190 residues: Somatotropin (190 aa).

H19 provides a ligand contact to Zn(2+). C52 and C163 are oxidised to a cystine. S105 carries the post-translational modification Phosphoserine. E172 provides a ligand contact to Zn(2+). C180 and C188 are oxidised to a cystine.

It belongs to the somatotropin/prolactin family.

The protein localises to the secreted. In terms of biological role, plays an important role in growth control. Its major role in stimulating body growth is to stimulate the liver and other tissues to secrete IGF1. It stimulates both the differentiation and proliferation of myoblasts. It also stimulates amino acid uptake and protein synthesis in muscle and other tissues. In Balaenoptera borealis (Sei whale), this protein is Somatotropin (GH1).